The following is an 845-amino-acid chain: MSAALPSIQLPVDYNNLFNEITDFLVTFKQDTLSSDATRNENEDENLDAENIEQHLLEKGPKYMAMLQKVANRELNSVIIDLDDILQYQNEKFLQGTQADDLVSAIQQNANHFTELFCRAIDNNMPLPTKEIDYKDDVLDVILNQRRLRNERMLSDRTNEIRSENLMDTTMDPPSSMNDALREVVEDETELFPPNLTRRYFLYFKPLSQNCARRYRKKAISSKPLSVRQIKGDFLGQLITVRGIITRVSDVKPAVEVIAYTCDQCGYEVFQEVNSRTFTPLSECTSEECSQNQTKGQLFMSTRASKFSAFQECKIQELSQQVPVGHIPRSLNIHVNGTLVRSLSPGDIVDVTGIFLPAPYTGFKALKAGLLTETYLEAQFVRQHKKKFASFSLTSDVEERVMELITSGDVYNRLAKSIAPEIYGNLDVKKALLLLLVGGVDKRVGDGMKIRGDINVCLMGDPGVAKSQLLKAICKISPRGVYTTGKGSSGVGLTAAVMKDPVTDEMILEGGALVLADNGICCIDEFDKMDESDRTAIHEVMEQQTISISKAGINTTLNARTSILAAANPLYGRYNPRLSPLDNINLPAALLSRFDILFLMLDIPSRDDDEKLAEHVTYVHMHNKQPDLDFTPVEPSKMREYIAYAKTKRPVMSEAVNDYVVQAYIRLRQDSKREMDSKFSFGQATPRTLLGIIRLSQALAKLRLADMVDIDDVEEALRLVRVSKESLYQETNKSKEDESPTTKIFTIIKKMLQETGKNTLSYENIVKTVRLRGFTMLQLSNCIQEYSYLNVWHLINEGNTLKFVDDGTMDTDQEDSLVSTPKLAPQTTASANVSAQDSDIDLQDA.

Residues 410-617 enclose the MCM domain; that stretch reads VYNRLAKSIA…DDEKLAEHVT (208 aa). ATP is bound by residues tyrosine 423, glycine 463, alanine 465, lysine 466, serine 467, asparagine 568, arginine 593, and arginine 687. The Arginine finger signature appears at 592–595; sequence SRFD. Phosphothreonine is present on threonine 811. The disordered stretch occupies residues 812–845; the sequence is DQEDSLVSTPKLAPQTTASANVSAQDSDIDLQDA. Residue serine 819 is modified to Phosphoserine. Residues 825-837 show a composition bias toward polar residues; sequence PQTTASANVSAQD. Serine 838 is modified (phosphoserine).

This sequence belongs to the MCM family. In terms of assembly, component of the MCM2-7 complex. The complex forms a toroidal hexameric ring with the proposed subunit order MCM2-MCM6-MCM4-MCM7-MCM3-MCM5; loaded onto DNA, forms a head-head double hexamer. Interacts with CSM1 and MCM10.

The protein localises to the cytoplasm. It localises to the nucleus. It catalyses the reaction ATP + H2O = ADP + phosphate + H(+). Functionally, acts as a component of the MCM2-7 complex (MCM complex) which is the putative replicative helicase essential for 'once per cell cycle' DNA replication initiation and elongation in eukaryotic cells. Core component of CDC45-MCM-GINS (CMG) helicase, the molecular machine that unwinds template DNA during replication, and around which the replisome is built. The active ATPase sites in the MCM2-7 ring are formed through the interaction surfaces of two neighboring subunits such that a critical structure of a conserved arginine finger motif is provided in trans relative to the ATP-binding site of the Walker A box of the adjacent subunit. The six ATPase active sites, however, are likely to contribute differentially to the complex helicase activity. Once loaded onto DNA, double hexamers can slide on dsDNA in the absence of ATPase activity. This Saccharomyces cerevisiae (strain ATCC 204508 / S288c) (Baker's yeast) protein is DNA replication licensing factor MCM7 (MCM7).